Reading from the N-terminus, the 157-residue chain is Transcriptional repressor NrdR (157 aa).

A zinc finger lies at 3 to 34 (CPFCGHAESQVKDSRPSEDGAAIRRRRMCPEC). In terms of domain architecture, ATP-cone spans 49 to 139 (LIIVKRSGRR…VYRDFKETSD (91 aa)).

This sequence belongs to the NrdR family. Zn(2+) serves as cofactor.

In terms of biological role, negatively regulates transcription of bacterial ribonucleotide reductase nrd genes and operons by binding to NrdR-boxes. This Caulobacter vibrioides (strain ATCC 19089 / CIP 103742 / CB 15) (Caulobacter crescentus) protein is Transcriptional repressor NrdR.